The sequence spans 199 residues: METFPLLLLSLGLVLAEASESTMKIIKEEFTDEEMQYDMAKSGQEKQTIEILMNPILLVKNTSLSMSKDDMSSTLLTFRSLHYNDPKGNSSGNDKECCNDMTVWRKVSEANGSCKWSNNFIRSSTEVMRRVHRAPSCKFVQNPGISCCESLELENTVCQFTTGKQFPRCQYHSVTSLEKILTVLTGHSLMSWLVCGSKL.

A signal peptide spans 1-16 (METFPLLLLSLGLVLA). N61 is a glycosylation site (N-linked (GlcNAc...) asparagine). The active-site Proton acceptor is H82. N89 and N111 each carry an N-linked (GlcNAc...) asparagine glycan. 2 cysteine pairs are disulfide-bonded: C98–C158 and C114–C169. 115 to 119 (KWSNN) provides a ligand contact to substrate.

It belongs to the pancreatic ribonuclease family.

It is found in the secreted. The sequence is that of Putative inactive ribonuclease 11 (RNASE11) from Homo sapiens (Human).